The chain runs to 135 residues: Interleukin-5 (135 aa).

A signal peptide spans 1–19 (MRVLLQLGLLALGAVCVCA). Residues asparagine 48, asparagine 77, and asparagine 91 are each glycosylated (N-linked (GlcNAc...) asparagine).

It belongs to the IL-5 family. Homodimer; disulfide-linked. Interacts with IL5RA. Interacts with CSF2RB.

The protein localises to the secreted. In terms of biological role, homodimeric cytokine expressed predominantly by T-lymphocytes and NK cells that plays an important role in the survival, differentiation, and chemotaxis of eosinophils. Also acts on activated and resting B-cells to induce immunoglobulin production, growth, and differentiation. Mechanistically, exerts its biological effects through a receptor composed of IL5RA subunit and the cytokine receptor common subunit beta/CSF2RB. Binding to the receptor leads to activation of various kinases including LYN, SYK and JAK2 and thereby propagates signals through the RAS-MAPK and JAK-STAT5 pathways respectively. The chain is Interleukin-5 (IL5) from Cavia porcellus (Guinea pig).